The sequence spans 622 residues: Pyranose 2-oxidase (622 aa).

The signal sequence occupies residues 1–28 (MSASSSDPFHSFAKTSFTSKAAKRATAH). Positions 29 to 37 (SLPPLPGPG) are excised as a propeptide. His-167 carries the post-translational modification Tele-8alpha-FAD histidine. Substrate is bound by residues Gln-449 and His-451. The Proton acceptor role is filled by His-546. The active site involves Asn-591.

The protein belongs to the GMC oxidoreductase family. In terms of assembly, homotetramer. The cofactor is FAD. Post-translationally, not glycosylated.

It is found in the periplasm. It carries out the reaction D-glucose + O2 = 2-dehydro-D-glucose + H2O2. Its function is as follows. Catalyzes the oxidation of various aldopyranoses and disaccharides on carbon-2 to the corresponding 2-keto sugars concomitant with the reduction of O(2) to H(2)O(2). Plays an important role in lignin degradation of wood rot fungi by supplying the essential cosubstrate H(2)O(2) for the ligninolytic peroxidases, lignin peroxidase and manganese-dependent peroxidase. The preferred substrate is D-glucose which is converted to 2-dehydro-D-glucose, an intermediate of a secondary metabolic pathway leading to the antibiotic cortalcerone. Also acts on D-xylose, together with D-glucose the major sugars derived from wood, on L-sorbose, D-galactose and 1,5-anhydroglucitol, a diagnostic marker of diabetes mellitus. This Phlebiopsis gigantea (White-rot fungus) protein is Pyranose 2-oxidase (p2ox).